The chain runs to 160 residues: uncharacterized protein (160 aa).

This is an uncharacterized protein from Bacillus subtilis (strain 168).